A 196-amino-acid chain; its full sequence is Proteasome subunit beta 1 (196 aa).

Residues 1–6 (MEELPA) constitute a propeptide, removed in mature form; by autocatalysis. The Nucleophile role is filled by T7.

This sequence belongs to the peptidase T1B family. The 20S proteasome core is composed of 14 alpha and 14 beta subunits that assemble into four stacked heptameric rings, resulting in a barrel-shaped structure. The two inner rings, each composed of seven catalytic beta subunits, are sandwiched by two outer rings, each composed of seven alpha subunits. The catalytic chamber with the active sites is on the inside of the barrel. Has a gated structure, the ends of the cylinder being occluded by the N-termini of the alpha-subunits. Is capped at one or both ends by the proteasome regulatory ATPase, PAN.

Its subcellular location is the cytoplasm. It carries out the reaction Cleavage of peptide bonds with very broad specificity.. With respect to regulation, the formation of the proteasomal ATPase PAN-20S proteasome complex, via the docking of the C-termini of PAN into the intersubunit pockets in the alpha-rings, triggers opening of the gate for substrate entry. Interconversion between the open-gate and close-gate conformations leads to a dynamic regulation of the 20S proteasome proteolysis activity. Its function is as follows. Component of the proteasome core, a large protease complex with broad specificity involved in protein degradation. This chain is Proteasome subunit beta 1, found in Saccharolobus solfataricus (strain ATCC 35092 / DSM 1617 / JCM 11322 / P2) (Sulfolobus solfataricus).